The primary structure comprises 419 residues: MNLTELKNTPVSELITLGENMGLENLARMRKQDIIFAILKQHAKSGEDIFGDGVLEILQDGFGFLRSADSSYLAGPDDIYVSPSQIRRFNLRTGDTISGKIRPPKEGERYFALLKVNEVNFDKPENARNKILFENLTPLHANSRLRMERGNGSTEDLTARVLDLASPIGRGQRGLIVAPPKAGKTMLLQNIAQSIAYNHPDCVLMVLLIDERPEEVTEMQRLVKGEVVASTFDEPASRHVQVAEMVIEKAKRLVEHKKDVIILLDSITRLARAYNTVVPASGKVLTGGVDANALHRPKRFFGAARNVEEGGSLTIIATALIDTGSKMDEVIYEEFKGTGNMELHLSRKIAEKRVFPAIDYNRSGTRKEELLTTQEELQKMWILRKIIHPMGEIDAMEFLINKLAMTKTNDDFFEMMKRS.

Residues 48-123 (DIFGDGVLEI…LKVNEVNFDK (76 aa)) enclose the Rho RNA-BD domain. RNA-binding regions lie at residues 61-66 (GFGFLR), 78-80 (DIY), and 108-110 (ERY). Residues 169–174 (GRGQRG), 181–186 (KAGKTM), and Arg212 contribute to the ATP site. The interval 284-288 (VLTGG) is RNA-binding 2.

This sequence belongs to the Rho family. In terms of assembly, homohexamer. The homohexamer assembles into an open ring structure.

Facilitates transcription termination by a mechanism that involves Rho binding to the nascent RNA, activation of Rho's RNA-dependent ATPase activity, and release of the mRNA from the DNA template. The chain is Transcription termination factor Rho from Escherichia coli O157:H7.